Reading from the N-terminus, the 855-residue chain is Homeobox-leucine zipper protein HOX33 (855 aa).

Residues 1–21 are disordered; sequence MAAAAVGGRGERLSSSSPTAA. The segment at residues 26–89 is a DNA-binding region (homeobox); that stretch reads DAGKYVRYTP…NRRCREKQRK (64 aa). A coiled-coil region spans residues 84 to 126; sequence REKQRKEASRLQTVNRKLNAMNKLLMEENDRLQKQVSRLVYEN. Positions 168–390 constitute an START domain; sequence DANNPAGLLA…LRHIRQIAHE (223 aa).

The protein belongs to the HD-ZIP homeobox family. Class III subfamily. Expressed in seedlings, roots, stems, leaf sheaths and blades and panicles.

It localises to the nucleus. Its function is as follows. Probable transcription factor. The protein is Homeobox-leucine zipper protein HOX33 (HOX33) of Oryza sativa subsp. indica (Rice).